We begin with the raw amino-acid sequence, 188 residues long: Adenine phosphoribosyltransferase (188 aa).

The protein belongs to the purine/pyrimidine phosphoribosyltransferase family. As to quaternary structure, homodimer.

It is found in the cytoplasm. It catalyses the reaction AMP + diphosphate = 5-phospho-alpha-D-ribose 1-diphosphate + adenine. The protein operates within purine metabolism; AMP biosynthesis via salvage pathway; AMP from adenine: step 1/1. In terms of biological role, catalyzes a salvage reaction resulting in the formation of AMP, that is energically less costly than de novo synthesis. The polypeptide is Adenine phosphoribosyltransferase (Burkholderia ambifaria (strain MC40-6)).